We begin with the raw amino-acid sequence, 182 residues long: Nucleoid-associated protein At2g24020, chloroplastic (182 aa).

The N-terminal 48 residues, 1 to 48, are a transit peptide targeting the chloroplast; sequence MASMAATTNFTKSMLFPFSHVSGNASLNSQRRTWPKQYKSKNGYRSLR.

Belongs to the YbaB/EbfC family. Homodimer. Interacts with ALB3 and ALB4.

The protein resides in the plastid. The protein localises to the chloroplast stroma. Functionally, participates with ALB4 in thylakoid protein targeting. May function with specific subset of thylakoidal proteins. Binds to DNA and alters its conformation. May be involved in regulation of gene expression, nucleoid organization and DNA protection. In Arabidopsis thaliana (Mouse-ear cress), this protein is Nucleoid-associated protein At2g24020, chloroplastic.